Here is a 111-residue protein sequence, read N- to C-terminus: Cytochrome c (111 aa).

A1 bears the N-acetylalanine mark. C22, C25, and H26 together coordinate heme c. An N6,N6,N6-trimethyllysine modification is found at K80. Position 88 (M88) interacts with heme c. The residue at position 94 (K94) is an N6,N6,N6-trimethyllysine.

This sequence belongs to the cytochrome c family. Post-translationally, binds 1 heme c group covalently per subunit.

Its subcellular location is the mitochondrion intermembrane space. Electron carrier protein. The oxidized form of the cytochrome c heme group can accept an electron from the heme group of the cytochrome c1 subunit of cytochrome reductase. Cytochrome c then transfers this electron to the cytochrome oxidase complex, the final protein carrier in the mitochondrial electron-transport chain. This Guizotia abyssinica (Niger) protein is Cytochrome c.